The sequence spans 374 residues: 4-hydroxy-3-methylbut-2-en-1-yl diphosphate synthase (flavodoxin) (374 aa).

[4Fe-4S] cluster contacts are provided by C270, C273, C305, and E312.

The protein belongs to the IspG family. The cofactor is [4Fe-4S] cluster.

It carries out the reaction (2E)-4-hydroxy-3-methylbut-2-enyl diphosphate + oxidized [flavodoxin] + H2O + 2 H(+) = 2-C-methyl-D-erythritol 2,4-cyclic diphosphate + reduced [flavodoxin]. Its pathway is isoprenoid biosynthesis; isopentenyl diphosphate biosynthesis via DXP pathway; isopentenyl diphosphate from 1-deoxy-D-xylulose 5-phosphate: step 5/6. Functionally, converts 2C-methyl-D-erythritol 2,4-cyclodiphosphate (ME-2,4cPP) into 1-hydroxy-2-methyl-2-(E)-butenyl 4-diphosphate. The chain is 4-hydroxy-3-methylbut-2-en-1-yl diphosphate synthase (flavodoxin) from Vibrio cholerae serotype O1 (strain ATCC 39315 / El Tor Inaba N16961).